Consider the following 104-residue polypeptide: MNIVMFFFDNYMFSDFNKSSLEIACIENDIGTVKKIINLNPNLDISHCLNLAIESKNYQIVKFLLKKNISNSVLLEAYDCACINGKISIMELLIQYLNNKSIVS.

ANK repeat units lie at residues 16–43 (FNKS…NPNL), 44–73 (DISH…SNSV), and 75–102 (LEAY…NKSI).

This is Putative ankyrin repeat protein L677 from Acanthamoeba polyphaga (Amoeba).